A 454-amino-acid polypeptide reads, in one-letter code: tRNA modification GTPase MnmE (454 aa).

The (6S)-5-formyl-5,6,7,8-tetrahydrofolate site is built by R23, E80, and K120. Residues 216–377 (GMKVVIAGRP…LRNHLKQSMG (162 aa)) enclose the TrmE-type G domain. A K(+)-binding site is contributed by N226. GTP contacts are provided by residues 226-231 (NAGKSS), 245-251 (TDIAGTT), 270-273 (DTAG), 335-338 (NKAD), and 358-360 (SAR). S230 serves as a coordination point for Mg(2+). T245, I247, and T250 together coordinate K(+). Mg(2+) is bound at residue T251. K454 contributes to the (6S)-5-formyl-5,6,7,8-tetrahydrofolate binding site.

The protein belongs to the TRAFAC class TrmE-Era-EngA-EngB-Septin-like GTPase superfamily. TrmE GTPase family. As to quaternary structure, homodimer. Heterotetramer of two MnmE and two MnmG subunits. The cofactor is K(+).

The protein resides in the cytoplasm. Exhibits a very high intrinsic GTPase hydrolysis rate. Involved in the addition of a carboxymethylaminomethyl (cmnm) group at the wobble position (U34) of certain tRNAs, forming tRNA-cmnm(5)s(2)U34. This chain is tRNA modification GTPase MnmE, found in Shigella boydii serotype 18 (strain CDC 3083-94 / BS512).